A 222-amino-acid chain; its full sequence is Large ribosomal subunit protein uL3 (222 aa).

Residues 129-150 (HNFRGLPDSHGTERKHRSPGSI) form a disordered region.

Belongs to the universal ribosomal protein uL3 family. In terms of assembly, part of the 50S ribosomal subunit. Forms a cluster with proteins L14 and L19.

In terms of biological role, one of the primary rRNA binding proteins, it binds directly near the 3'-end of the 23S rRNA, where it nucleates assembly of the 50S subunit. This chain is Large ribosomal subunit protein uL3, found in Acidothermus cellulolyticus (strain ATCC 43068 / DSM 8971 / 11B).